The sequence spans 349 residues: Thioredoxin-related transmembrane protein 4 (349 aa).

A signal peptide spans 1–23 (MAGGRCGPQLTALLAAWIAAVAA). One can recognise a Thioredoxin domain in the interval 30 to 137 (AALPPEQSRV…FEDLQNYILE (108 aa)). Catalysis depends on nucleophile residues C64 and C67. Residues C64 and C67 are joined by a disulfide bond. Residues 190–210 (VFFVIATLVFGLFMGLVLVVI) form a helical membrane-spanning segment. Residues 225 to 240 (RSEQNRRSEEAHRAEQ) show a composition bias toward basic and acidic residues. Positions 225-349 (RSEQNRRSEE…RKSQHADKGL (125 aa)) are disordered. Acidic residues-rich tracts occupy residues 242 to 284 (QDAE…EEDN) and 312 to 321 (VEPEEAEEGI). A phosphoserine mark is found at S251 and S259. Positions 335–349 (DSLRQRKSQHADKGL) are enriched in basic and acidic residues.

Its subcellular location is the nucleus inner membrane. It localises to the endoplasmic reticulum membrane. The chain is Thioredoxin-related transmembrane protein 4 (TMX4) from Homo sapiens (Human).